The following is a 30-amino-acid chain: Trypsin inhibitor 3 (30 aa).

3 disulfide bridges follow: cysteine 4/cysteine 21, cysteine 11/cysteine 23, and cysteine 17/cysteine 29.

Belongs to the protease inhibitor I7 (squash-type serine protease inhibitor) family.

Its subcellular location is the secreted. Functionally, inhibits lysyl endopeptidase and trypsin. The chain is Trypsin inhibitor 3 from Cucumis melo var. conomon (Oriental pickling melon).